We begin with the raw amino-acid sequence, 506 residues long: Maturase K (506 aa).

This sequence belongs to the intron maturase 2 family. MatK subfamily.

The protein localises to the plastid. The protein resides in the chloroplast. In terms of biological role, usually encoded in the trnK tRNA gene intron. Probably assists in splicing its own and other chloroplast group II introns. This chain is Maturase K, found in Rhododendron tomentosum (Marsh Labrador tea).